A 113-amino-acid chain; its full sequence is 4-cresol dehydrogenase [hydroxylating] cytochrome c subunit (113 aa).

The N-terminal stretch at 1–33 is a signal peptide; it reads MTFPFSGAAVKRMLVTGVVLPFGLLVAAGQAQA. Heme c is bound by residues C48, C51, H52, and M83.

In terms of assembly, tetramer of two cytochrome subunits and two flavoprotein subunits. Binds 1 heme c group covalently per subunit.

It functions in the pathway aromatic compound metabolism; p-cresol degradation. Its function is as follows. This is the heme-containing component of the p-cresol methylhydroxylase. It accepts electrons from the flavoprotein subunit. The polypeptide is 4-cresol dehydrogenase [hydroxylating] cytochrome c subunit (pchC) (Pseudomonas putida (Arthrobacter siderocapsulatus)).